The chain runs to 385 residues: Nonsense-mediated mRNA decay factor SMG9 (385 aa).

Positions 1 to 32 (MKKVEILKTSRPSSAGGAARPSTASPTHGAPK) are disordered.

It belongs to the SMG9 family.

Its function is as follows. Involved in nonsense-mediated decay (NMD) of mRNAs containing premature stop codons. Probable component of kinase complex containing smg-1 and recruited to stalled ribosomes. This Caenorhabditis elegans protein is Nonsense-mediated mRNA decay factor SMG9 (smg-9).